The following is a 434-amino-acid chain: UDP-N-acetylglucosamine 1-carboxyvinyltransferase 1 (434 aa).

22–23 (KN) lines the phosphoenolpyruvate pocket. Residue arginine 93 participates in UDP-N-acetyl-alpha-D-glucosamine binding. Cysteine 117 acts as the Proton donor in catalysis. Residue cysteine 117 is modified to 2-(S-cysteinyl)pyruvic acid O-phosphothioketal. UDP-N-acetyl-alpha-D-glucosamine contacts are provided by residues 122-126 (RPIDQ), aspartate 306, and valine 328.

The protein belongs to the EPSP synthase family. MurA subfamily.

The protein localises to the cytoplasm. The enzyme catalyses phosphoenolpyruvate + UDP-N-acetyl-alpha-D-glucosamine = UDP-N-acetyl-3-O-(1-carboxyvinyl)-alpha-D-glucosamine + phosphate. It functions in the pathway cell wall biogenesis; peptidoglycan biosynthesis. Cell wall formation. Adds enolpyruvyl to UDP-N-acetylglucosamine. The protein is UDP-N-acetylglucosamine 1-carboxyvinyltransferase 1 of Bacillus anthracis.